The chain runs to 105 residues: MSAKIKSGDDVIVLTGKDKGKIGKVIKVIARDAKKKVIVSGVNVHKRHTKPKAGSSGGILNKELAIDISNVATLDPKYKTPTRVGFKVIDGRKVRFAKVSGEVID.

The protein belongs to the universal ribosomal protein uL24 family. As to quaternary structure, part of the 50S ribosomal subunit.

Functionally, one of two assembly initiator proteins, it binds directly to the 5'-end of the 23S rRNA, where it nucleates assembly of the 50S subunit. Its function is as follows. One of the proteins that surrounds the polypeptide exit tunnel on the outside of the subunit. The sequence is that of Large ribosomal subunit protein uL24 from Wolbachia pipientis wMel.